A 230-amino-acid chain; its full sequence is 5'-methylthioadenosine/S-adenosylhomocysteine nucleosidase (230 aa).

Catalysis depends on Glu12, which acts as the Proton acceptor. Residues Gly78, Ile153, and 174–175 each bind substrate; that span reads ME. Asp198 functions as the Proton donor in the catalytic mechanism.

It belongs to the PNP/UDP phosphorylase family. MtnN subfamily.

The enzyme catalyses S-adenosyl-L-homocysteine + H2O = S-(5-deoxy-D-ribos-5-yl)-L-homocysteine + adenine. It carries out the reaction S-methyl-5'-thioadenosine + H2O = 5-(methylsulfanyl)-D-ribose + adenine. It catalyses the reaction 5'-deoxyadenosine + H2O = 5-deoxy-D-ribose + adenine. It participates in amino-acid biosynthesis; L-methionine biosynthesis via salvage pathway; S-methyl-5-thio-alpha-D-ribose 1-phosphate from S-methyl-5'-thioadenosine (hydrolase route): step 1/2. Its function is as follows. Catalyzes the irreversible cleavage of the glycosidic bond in both 5'-methylthioadenosine (MTA) and S-adenosylhomocysteine (SAH/AdoHcy) to adenine and the corresponding thioribose, 5'-methylthioribose and S-ribosylhomocysteine, respectively. Also cleaves 5'-deoxyadenosine, a toxic by-product of radical S-adenosylmethionine (SAM) enzymes, into 5-deoxyribose and adenine. In Shewanella frigidimarina (strain NCIMB 400), this protein is 5'-methylthioadenosine/S-adenosylhomocysteine nucleosidase.